The following is a 318-amino-acid chain: RNA polymerase II transcription factor B subunit 3 (318 aa).

Residues 13–54 form an RING-type zinc finger; the sequence is CPLCQADRYLNPNMKLLINPECYHKMCESCVDRIFTTGPAQC.

In terms of assembly, one of the nine subunits forming the core-TFIIH basal transcription factor. Also interacts with skp1 and with the mcs2-mcs6 complex.

Its subcellular location is the cytoplasm. It localises to the nucleus. Functionally, acts as a component of the general transcription and DNA repair factor IIH (TFIIH or factor B), which is essential for both basal and activated transcription, and is involved in nucleotide excision repair (NER) of damaged DNA. TFIIH has CTD kinase activity and DNA-dependent ATPase activity, and is essential for polymerase II transcription. In Schizosaccharomyces pombe (strain 972 / ATCC 24843) (Fission yeast), this protein is RNA polymerase II transcription factor B subunit 3 (pmh1).